We begin with the raw amino-acid sequence, 345 residues long: N(4)-(Beta-N-acetylglucosaminyl)-L-asparaginase (345 aa).

A signal peptide spans 1–23; sequence MARKWNLPFLLLPLVLGIPLVRG. N-linked (GlcNAc...) asparagine glycosylation occurs at asparagine 38. A disulfide bridge connects residues cysteine 64 and cysteine 69. The N-linked (GlcNAc...) asparagine glycan is linked to asparagine 149. Cysteines 163 and 179 form a disulfide. Catalysis depends on threonine 205, which acts as the Nucleophile. Substrate is bound by residues 233–236 and 256–259; these read RVGD and TGDG. The cysteines at positions 285 and 305 are disulfide-linked. Asparagine 307 carries an N-linked (GlcNAc...) asparagine glycan. The cysteines at positions 316 and 344 are disulfide-linked.

Belongs to the Ntn-hydrolase family. Heterotetramer of two alpha and two beta chains arranged as a dimer of alpha/beta heterodimers. Post-translationally, N-glycosylated. Cleaved into an alpha and beta chain by autocatalysis; this activates the enzyme. The N-terminal residue of the beta subunit is responsible for the nucleophile hydrolase activity.

The protein resides in the lysosome. It carries out the reaction N(4)-(beta-N-acetyl-D-glucosaminyl)-L-asparagine + H2O = N-acetyl-beta-D-glucosaminylamine + L-aspartate + H(+). In terms of biological role, cleaves the GlcNAc-Asn bond which joins oligosaccharides to the peptide of asparagine-linked glycoproteins. This is N(4)-(Beta-N-acetylglucosaminyl)-L-asparaginase (Aga) from Rattus norvegicus (Rat).